The following is a 279-amino-acid chain: Ribosomal RNA small subunit methyltransferase J (279 aa).

Residues 138–139 (ER) and Asp194 each bind S-adenosyl-L-methionine.

The protein belongs to the methyltransferase superfamily. RsmJ family.

It is found in the cytoplasm. It carries out the reaction guanosine(1516) in 16S rRNA + S-adenosyl-L-methionine = N(2)-methylguanosine(1516) in 16S rRNA + S-adenosyl-L-homocysteine + H(+). Functionally, specifically methylates the guanosine in position 1516 of 16S rRNA. This is Ribosomal RNA small subunit methyltransferase J from Acinetobacter baumannii (strain AYE).